Here is a 506-residue protein sequence, read N- to C-terminus: Maturase K (506 aa).

It belongs to the intron maturase 2 family. MatK subfamily.

Its subcellular location is the plastid. The protein localises to the chloroplast. Usually encoded in the trnK tRNA gene intron. Probably assists in splicing its own and other chloroplast group II introns. The protein is Maturase K of Trifolium repens (Creeping white clover).